A 222-amino-acid polypeptide reads, in one-letter code: Cyclin-dependent kinase inhibitor 3 (222 aa).

The tract at residues 68-101 is disordered; the sequence is KPSSLIEPKQPPRVHRSGIKESGSRSRVDSVNSV. Positions 85–95 are enriched in basic and acidic residues; it reads GIKESGSRSRV.

Belongs to the CDI family. ICK/KRP subfamily. In terms of assembly, specifically interacts with CDKA-1, but not with CDKB1-1.

It localises to the nucleus. The protein localises to the nucleoplasm. Functionally, binds and inhibits CYCD2-1/CDKA-1 complex kinase activity. May target specifically CDKA-1. The chain is Cyclin-dependent kinase inhibitor 3 (KRP3) from Arabidopsis thaliana (Mouse-ear cress).